Reading from the N-terminus, the 282-residue chain is Acyl-CoA-binding domain-containing protein 6 (282 aa).

The disordered stretch occupies residues 1-39 (MATPFLPSGATTGDSGGELSSGDDSGDMESFQTPEAEGT). Position 41 is a phosphoserine (Ser-41). An ACB domain is found at 42–127 (LAELFEKAAA…VKKLDPGWNP (86 aa)). An acyl-CoA contacts are provided by residues 69–73 (YARFK) and Lys-95. Residue Ser-106 is modified to Phosphoserine. An acyl-CoA is bound at residue Tyr-114. ANK repeat units lie at residues 191–220 (EGRA…GINC) and 224–253 (EGQT…DPTL).

Monomer.

Its subcellular location is the cytoplasm. It localises to the nucleus. Binds long-chain acyl-coenzyme A molecules with a strong preference for unsaturated C18:1-CoA, lower affinity for unsaturated C20:4-CoA, and very weak affinity for saturated C16:0-CoA. Does not bind fatty acids. Plays a role in protein N-myristoylation. This Mus musculus (Mouse) protein is Acyl-CoA-binding domain-containing protein 6 (Acbd6).